We begin with the raw amino-acid sequence, 136 residues long: Psoriasis susceptibility 1 candidate gene 2 protein (136 aa).

An N-terminal signal peptide occupies residues 1-22 (MILNWKLLGILVLCLHTRGISG). The tract at residues 20 to 136 (ISGSEGHPSH…DLDPPREEYR (117 aa)) is disordered. Composition is skewed to pro residues over residues 44-69 (PQGP…PTRP) and 84-116 (PEPP…PPAP). The segment covering 118–136 (VDNRPQEEPDLDPPREEYR) has biased composition (basic and acidic residues).

Expressed in skin. Also expressed in heart and skeletal muscle.

The protein localises to the secreted. In Homo sapiens (Human), this protein is Psoriasis susceptibility 1 candidate gene 2 protein (PSORS1C2).